The following is a 315-amino-acid chain: NAD(P)H-dependent 6'-deoxychalcone synthase (315 aa).

The Proton donor role is filled by tyrosine 59. Residue histidine 121 coordinates substrate. Residue serine 216 to asparagine 274 coordinates NADP(+).

The protein belongs to the aldo/keto reductase family. As to quaternary structure, monomer.

The enzyme catalyses 4-coumaroyl-CoA + 3 malonyl-CoA + NADPH + 4 H(+) = isoliquiritigenin + 3 CO2 + NADP(+) + 4 CoA + H2O. It participates in phytoalexin biosynthesis; glyceollin biosynthesis. Co-acts with chalcone synthase in formation of 4,2',4'-trihydroxychalcone, involved in the biosynthesis of glyceollin type phytoalexins. The protein is NAD(P)H-dependent 6'-deoxychalcone synthase of Glycine max (Soybean).